A 463-amino-acid polypeptide reads, in one-letter code: MTSTLTPREIVERLNQYIVGQDGAKRSVAVALRNRYRRTKLDPSMREEITPKNILMIGPTGVGKTEIARRLAKLVGAPFIKVEATKFTEVGYVGRDVESMVRDLVESSVRLVKEERVALVKDEAKQLADKRLIELLVPSMKKETNYKNPFEMLFSQPDKEEEEDGEEELTRANLKRKMAEKLKQGELEERTVTVEVTEQNHGFMDLFQGGAGMEQMGMNMQEMLSNMMPKKKKKRRMTVAEARGVLAEEEAQKLIDMDDVTQEAITRAEQLGIIFIDEIDKVAGKNDQGANVSREGVQRDILPIVEGSTVVTKYGAVKTDHILFIAAGAFHMAKPADLIPELQGRFPIRVELQSLSVDDFVRILVEPDNALTKQYEALLQTEGIEMKFSDEAVRKIATIASEVNQETENIGARRLHTLLEKLLEDLSFEAADIHLETLEITEQYVEEKLGSIAKNRDLSQFIL.

ATP-binding positions include Val-19, 61-66, Asp-277, Glu-341, and Arg-413; that span reads GVGKTE.

This sequence belongs to the ClpX chaperone family. HslU subfamily. A double ring-shaped homohexamer of HslV is capped on each side by a ring-shaped HslU homohexamer. The assembly of the HslU/HslV complex is dependent on binding of ATP.

The protein localises to the cytoplasm. Its function is as follows. ATPase subunit of a proteasome-like degradation complex; this subunit has chaperone activity. The binding of ATP and its subsequent hydrolysis by HslU are essential for unfolding of protein substrates subsequently hydrolyzed by HslV. HslU recognizes the N-terminal part of its protein substrates and unfolds these before they are guided to HslV for hydrolysis. This chain is ATP-dependent protease ATPase subunit HslU, found in Shouchella clausii (strain KSM-K16) (Alkalihalobacillus clausii).